Consider the following 396-residue polypeptide: ATP phosphoribosyltransferase regulatory subunit (396 aa).

The protein belongs to the class-II aminoacyl-tRNA synthetase family. HisZ subfamily. As to quaternary structure, heteromultimer composed of HisG and HisZ subunits.

Its subcellular location is the cytoplasm. Its pathway is amino-acid biosynthesis; L-histidine biosynthesis; L-histidine from 5-phospho-alpha-D-ribose 1-diphosphate: step 1/9. Required for the first step of histidine biosynthesis. May allow the feedback regulation of ATP phosphoribosyltransferase activity by histidine. This is ATP phosphoribosyltransferase regulatory subunit from Cellvibrio japonicus (strain Ueda107) (Pseudomonas fluorescens subsp. cellulosa).